Consider the following 421-residue polypeptide: Adenylosuccinate synthetase (421 aa).

Residues 11-17 and 39-41 contribute to the GTP site; these read GDEGKGK and GHT. D12 acts as the Proton acceptor in catalysis. The Mg(2+) site is built by D12 and G39. IMP-binding positions include 12 to 15, 37 to 40, T129, R143, N219, T234, and R298; these read DEGK and NAGH. H40 functions as the Proton donor in the catalytic mechanism. 294-300 lines the substrate pocket; sequence VTTGRRR. GTP contacts are provided by residues R300, 326-328, and 409-411; these read KLD and GTG.

It belongs to the adenylosuccinate synthetase family. Homodimer. Mg(2+) serves as cofactor.

Its subcellular location is the cytoplasm. It carries out the reaction IMP + L-aspartate + GTP = N(6)-(1,2-dicarboxyethyl)-AMP + GDP + phosphate + 2 H(+). It functions in the pathway purine metabolism; AMP biosynthesis via de novo pathway; AMP from IMP: step 1/2. In terms of biological role, plays an important role in the de novo pathway and in the salvage pathway of purine nucleotide biosynthesis. Catalyzes the first committed step in the biosynthesis of AMP from IMP. The sequence is that of Adenylosuccinate synthetase from Paracoccidioides lutzii (strain ATCC MYA-826 / Pb01) (Paracoccidioides brasiliensis).